A 176-amino-acid polypeptide reads, in one-letter code: Protein FAM89A (176 aa).

The segment at 140–165 (DFQEQGSLRDGQGRGSPGDPSLPLTH) is disordered.

The protein belongs to the FAM89 family.

The protein is Protein FAM89A (Fam89a) of Rattus norvegicus (Rat).